Consider the following 342-residue polypeptide: Delta(6)-protoilludene synthase 8 (342 aa).

Aspartate 81 serves as a coordination point for Mg(2+). The short motif at arginine 93 to aspartate 97 is the DDXXD motif element. Asparagine 217, serine 221, and glutamate 225 together coordinate Mg(2+). The NSE/DTE motif motif lies at asparagine 217–glutamate 225. (2E,6E)-farnesyl diphosphate-binding residues include arginine 305 and tyrosine 306.

It belongs to the terpene synthase family. Mg(2+) serves as cofactor.

The catalysed reaction is (2E,6E)-farnesyl diphosphate = Delta(6)-protoilludene + diphosphate. Terpene cyclase that catalyzes the cyclization of farnesyl diphosphate (FPP) to delta(6)-protoilludene. This is Delta(6)-protoilludene synthase 8 from Postia placenta (strain ATCC 44394 / Madison 698-R) (Brown rot fungus).